The chain runs to 339 residues: Glycerol-3-phosphate dehydrogenase [NAD(P)+] (339 aa).

NADPH-binding residues include Ser-15, Tyr-16, His-36, and Lys-110. Residues Lys-110, Gly-139, and Thr-141 each contribute to the sn-glycerol 3-phosphate site. Ala-143 lines the NADPH pocket. Lys-195, Asp-248, Ser-258, Arg-259, and Asn-260 together coordinate sn-glycerol 3-phosphate. Catalysis depends on Lys-195, which acts as the Proton acceptor. Position 259 (Arg-259) interacts with NADPH. Val-283 and Glu-285 together coordinate NADPH.

This sequence belongs to the NAD-dependent glycerol-3-phosphate dehydrogenase family.

It is found in the cytoplasm. The enzyme catalyses sn-glycerol 3-phosphate + NAD(+) = dihydroxyacetone phosphate + NADH + H(+). It catalyses the reaction sn-glycerol 3-phosphate + NADP(+) = dihydroxyacetone phosphate + NADPH + H(+). It participates in membrane lipid metabolism; glycerophospholipid metabolism. In terms of biological role, catalyzes the reduction of the glycolytic intermediate dihydroxyacetone phosphate (DHAP) to sn-glycerol 3-phosphate (G3P), the key precursor for phospholipid synthesis. The sequence is that of Glycerol-3-phosphate dehydrogenase [NAD(P)+] from Cronobacter sakazakii (strain ATCC BAA-894) (Enterobacter sakazakii).